Reading from the N-terminus, the 514-residue chain is Transmembrane protein 117 (514 aa).

The Cytoplasmic portion of the chain corresponds to 1–15 (MGKDFRYYFQHPWSR). Residues 16-36 (MIVAYLVIFFNFLIFAEDPVS) traverse the membrane as a helical segment. At 37–65 (HSQTEANVIVVGNCFSFVTNKYPRGVGWR) the chain is on the extracellular side. Residues 66–86 (ILKVLLWLLAILIGLIAGKFL) traverse the membrane as a helical segment. Over 87–110 (FHQRLFGQLLRLKMFREDHGSWMT) the chain is Cytoplasmic. A helical membrane pass occupies residues 111–131 (MFFSTILFLFIFSHIYNTILL). At 132-154 (MDGNMGAYLITDYMGIRNESFMK) the chain is on the extracellular side. The chain crosses the membrane as a helical span at residues 155-175 (LAAVGTWMGDFVTAWMVTDMM). Residues 176–198 (LQDKPYPDWGKSARAFWKKGNVR) are Cytoplasmic-facing. Residues 199-219 (IILFWTVLFTLTSVVVLVITT) traverse the membrane as a helical segment. Topologically, residues 220 to 239 (DWISWDKLNRGFLPSDEVSR) are extracellular. Residues 240–260 (AFLASFILVFDLLIVMQDWEF) form a helical membrane-spanning segment. Residues 261-295 (PHFMGDVDVNLPGLHTPHMQFKIPFFQKIFKEEYR) lie on the Cytoplasmic side of the membrane. The helical transmembrane segment at 296–316 (IHITGKWFNYGIIFLVLILDL) threads the bilayer. Topologically, residues 317–394 (NMWKNQIFYK…FIGASLDVKC (78 aa)) are extracellular. Residues N353 and N371 are each glycosylated (N-linked (GlcNAc...) asparagine). Residues 395-415 (LAFVPSLIAFVWFGFFIWFFG) form a helical membrane-spanning segment. The Cytoplasmic segment spans residues 416–514 (RFLKNEQGME…PAASQRMRTN (99 aa)). Residues 430 to 450 (TYTRMKRKSPSEHSKDMGITR) form a disordered region. Residues 438-448 (SPSEHSKDMGI) are compositionally biased toward basic and acidic residues. T453 bears the Phosphothreonine mark. Positions 494–514 (ESTSEVEAEQEPAASQRMRTN) are disordered.

This sequence belongs to the TMEM117 family.

It is found in the cell membrane. Functionally, involved in endoplasmic reticulum (ER) stress-induced cell death pathway. The polypeptide is Transmembrane protein 117 (Tmem117) (Mus musculus (Mouse)).